The sequence spans 274 residues: Oxidized low-density lipoprotein receptor 1 (274 aa).

A disordered region spans residues 1 to 28 (MTLDDLKSNSMKDQPDEKSNGDKAEGPR). The Cytoplasmic portion of the chain corresponds to 1-37 (MTLDDLKSNSMKDQPDEKSNGDKAEGPRSLSTLRWRP). Positions 13 to 26 (DQPDEKSNGDKAEG) are enriched in basic and acidic residues. The chain crosses the membrane as a helical; Signal-anchor for type II membrane protein span at residues 38–60 (AALILGLLCLGLLVTVILLIIQL). Cys46 is lipidated: S-palmitoyl cysteine. The segment at 61-150 (SQVSDLLKQQ…SGPCPQDWLW (90 aa)) is neck. At 61–274 (SQVSDLLKQQ…QKRANLLRAQ (214 aa)) the chain is on the extracellular side. Residues 89 to 142 (RQAEKSSQESQRELTEMIETLAHKLDEKSKKLMELQQQNLNLQKALEKAANFSG) are a coiled coil. Residue Asn139 is glycosylated (N-linked (GlcNAc...) asparagine). Intrachain disulfides connect Cys144–Cys155, Cys172–Cys264, and Cys243–Cys256. Residues 151 to 265 (HEENCYKFSS…CILNAFSICQ (115 aa)) form the C-type lectin domain.

As to quaternary structure, homodimer; disulfide-linked. May form a hexamer composed of 3 homodimers. Interacts with HSP70. N-glycosylated.

It localises to the cell membrane. Its subcellular location is the membrane raft. The protein resides in the secreted. Receptor that mediates the recognition, internalization and degradation of oxidatively modified low density lipoprotein (oxLDL) by vascular endothelial cells. OxLDL is a marker of atherosclerosis that induces vascular endothelial cell activation and dysfunction, resulting in pro-inflammatory responses, pro-oxidative conditions and apoptosis. Its association with oxLDL induces the activation of NF-kappa-B through an increased production of intracellular reactive oxygen and a variety of pro-atherogenic cellular responses including a reduction of nitric oxide (NO) release, monocyte adhesion and apoptosis. In addition to binding oxLDL, it acts as a receptor for the HSP70 protein involved in antigen cross-presentation to naive T-cells in dendritic cells, thereby participating in cell-mediated antigen cross-presentation. Also involved in inflammatory process, by acting as a leukocyte-adhesion molecule at the vascular interface in endotoxin-induced inflammation. Also acts as a receptor for advanced glycation end (AGE) products, activated platelets, monocytes, apoptotic cells and both Gram-negative and Gram-positive bacteria. The sequence is that of Oxidized low-density lipoprotein receptor 1 (OLR1) from Sus scrofa (Pig).